The chain runs to 67 residues: Large ribosomal subunit protein uL29 (67 aa).

Belongs to the universal ribosomal protein uL29 family.

This chain is Large ribosomal subunit protein uL29, found in Agathobacter rectalis (strain ATCC 33656 / DSM 3377 / JCM 17463 / KCTC 5835 / VPI 0990) (Eubacterium rectale).